Here is a 297-residue protein sequence, read N- to C-terminus: uncharacterized protein (297 aa).

3 disordered regions span residues 19-133 (NEVD…EEKE), 147-214 (AEDD…VGIA), and 226-277 (EKTS…SKEA). Residues 41–52 (EEPKNEKEKHDD) are compositionally biased toward basic and acidic residues. A compositionally biased stretch (acidic residues) spans 77–87 (PAEDDEEDEEF). The segment covering 88-101 (PSQSYGPSIPSNFR) has biased composition (polar residues). Basic and acidic residues-rich tracts occupy residues 147-161 (AEDD…REEW) and 236-268 (IHQK…EVRG).

This is an uncharacterized protein from Caenorhabditis elegans.